The following is an 835-amino-acid chain: Adhesion G protein-coupled receptor E5 (835 aa).

The signal sequence occupies residues 1 to 20; the sequence is MGGRVFLAFCVWLTLPGAET. The Extracellular portion of the chain corresponds to 21–552; the sequence is QDSRGCARWC…EDWKLTLITR (532 aa). In terms of domain architecture, EGF-like 1 spans 22-63; that stretch reads DSRGCARWCPQNSSCVNATACRCNPGFSSFSEIITTPTETCD. 15 disulfides stabilise this stretch: Cys26–Cys36, Cys30–Cys42, Cys44–Cys62, Cys68–Cys82, Cys76–Cys91, Cys93–Cys114, Cys120–Cys133, Cys127–Cys142, Cys144–Cys158, Cys164–Cys177, Cys171–Cys186, Cys188–Cys207, Cys213–Cys226, Cys220–Cys235, and Cys237–Cys256. Residues Asn33 and Asn38 are each glycosylated (N-linked (GlcNAc...) asparagine). Residues 64–115 form the EGF-like 2; calcium-binding domain; that stretch reads DINECATPSKVSCGKFSDCWNTEGSYDCVCSPGYEPVSGAKTFKNESENTCQ. The N-linked (GlcNAc...) asparagine glycan is linked to Asn108. One can recognise an EGF-like 3; calcium-binding domain in the interval 116 to 159; it reads DVDECQQNPRLCKSYGTCVNTLGSYTCQCLPGFKFIPEDPKVCT. The EGF-like 4; calcium-binding domain occupies 160–208; it reads DVNECTSGQNPCHSSTHCLNNVGSYQCRCRPGWQPIPGSPNGPNNTVCE. An N-linked (GlcNAc...) asparagine glycan is attached at Asn203. The EGF-like 5; calcium-binding domain occupies 209–257; sequence DVDECSSGQHQCDSSTVCFNTVGSYSCRCRPGWKPRHGIPNNQKDTVCE. One can recognise a GAIN-B domain in the interval 349–543; that stretch reads PFTYISPSNT…AILMAHYDVE (195 aa). Residues Asn371, Asn406, Asn413, Asn453, and Asn520 are each glycosylated (N-linked (GlcNAc...) asparagine). 2 disulfides stabilise this stretch: Cys495/Cys525 and Cys513/Cys527. The segment at 495–543 is GPS; that stretch reads CAFWKSDSDRGGHWATEGCQVLGSKNGSTTCQCSHLSSFAILMAHYDVE. The chain crosses the membrane as a helical span at residues 553–572; it reads VGLALSLFCLLLCILTFLLV. Residues 573–581 are Cytoplasmic-facing; that stretch reads RPIQGSRTT. A helical membrane pass occupies residues 582–601; sequence IHLHLCICLFVGSTIFLAGI. The Extracellular segment spans residues 602 to 620; the sequence is ENEGGQVGLRCRLVAGLLH. The helical transmembrane segment at 621–642 threads the bilayer; the sequence is YCFLAAFCWMSLEGLELYFLVV. Residues 643-653 lie on the Cytoplasmic side of the membrane; sequence RVFQGQGLSTR. The helical transmembrane segment at 654-674 threads the bilayer; it reads WLCLIGYGVPLLIVGVSAAIY. The Extracellular segment spans residues 675 to 691; it reads SKGYGRPRYCWLDFEQG. Residues 692-712 form a helical membrane-spanning segment; it reads FLWSFLGPVTFIILCNAVIFV. The Cytoplasmic portion of the chain corresponds to 713–739; the sequence is TTVWKLTQKFSEINPDMKKLKKARALT. A helical membrane pass occupies residues 740-760; the sequence is ITAIAQLFLLGCTWVFGLFIF. The Extracellular portion of the chain corresponds to 761–766; the sequence is DDRSLV. The helical transmembrane segment at 767–789 threads the bilayer; the sequence is LTYVFTILNCLQGAFLYLLHCLL. At 790–835 the chain is on the cytoplasmic side; the sequence is NKKVREEYRKWACLVAGGSKYSEFTSTTSGTGHNQTRALRASESGI. Over residues 814-826 the composition is skewed to polar residues; that stretch reads TSTTSGTGHNQTR. The interval 814–835 is disordered; sequence TSTTSGTGHNQTRALRASESGI. At Ser815 the chain carries Phosphoserine. Thr816 carries the post-translational modification Phosphothreonine. Residue Ser818 is modified to Phosphoserine. Position 825 is a phosphothreonine (Thr825). Residues Ser831 and Ser833 each carry the phosphoserine modification.

The protein belongs to the G-protein coupled receptor 2 family. LN-TM7 subfamily. Forms a heterodimer, consisting of a large extracellular region (alpha subunit) non-covalently linked to a seven-transmembrane moiety (beta subunit). Interacts with complement decay-accelerating factor (DAF). The largest isoform (isoform 1) interacts with chondroitin sulfate. In terms of processing, proteolytically cleaved into 2 subunits, an extracellular alpha subunit and a seven-transmembrane subunit. In terms of tissue distribution, broadly expressed, found on most hematopoietic cells, including activated lymphocytes, monocytes, macrophages, dendritic cells, and granulocytes. Expressed also abundantly by smooth muscle cells. Expressed in thyroid, colorectal, gastric, esophageal and pancreatic carcinomas too. Expression are increased under inflammatory conditions in the CNS of multiple sclerosis and in synovial tissue of patients with rheumatoid arthritis. Increased expression of CD97 in the synovium is accompanied by detectable levels of soluble CD97 in the synovial fluid.

It localises to the cell membrane. The protein localises to the secreted. The protein resides in the extracellular space. Receptor potentially involved in both adhesion and signaling processes early after leukocyte activation. Plays an essential role in leukocyte migration. This is Adhesion G protein-coupled receptor E5 from Homo sapiens (Human).